Here is a 733-residue protein sequence, read N- to C-terminus: 2'-5'-oligoadenylate synthase 2 (733 aa).

Gly-2 carries N-myristoyl glycine lipidation. 2 OAS domain regions span residues 47 to 365 (VPSQ…CWDV) and 373 to 713 (TPSH…WKVP). The residue at position 408 (Lys-408) is an N6-acetyllysine. Ser-427 contributes to the ATP binding site. Mg(2+)-binding residues include Asp-439, Asp-441, and Asp-510. Arg-574 and Lys-577 together coordinate ATP.

The protein belongs to the 2-5A synthase family. Homodimer. Mg(2+) serves as cofactor. Post-translationally, myristoylation is not essential for its activity. In terms of processing, glycosylated. Glycosylation is essential for its activity.

The protein resides in the cytoplasm. The protein localises to the perinuclear region. It carries out the reaction 3 ATP = 5'-triphosphoadenylyl-(2'-&gt;5')-adenylyl-(2'-&gt;5')-adenosine + 2 diphosphate. With respect to regulation, produced as a latent enzyme which is activated by double stranded RNA (dsRNA) generated during the course of viral infection. The dsRNA activator must be at least 15 nucleotides long, and no modification of the 2'-hydroxyl group is tolerated. ssRNA or dsDNA do not act as activators. Strongly inhibited by copper, iron and zinc ions. Partially inhibited by cobalt and nickel ions. Functionally, interferon-induced, dsRNA-activated antiviral enzyme which plays a critical role in cellular innate antiviral response. Activated by detection of double stranded RNA (dsRNA): polymerizes higher oligomers of 2'-5'-oligoadenylates (2-5A) from ATP which then bind to the inactive monomeric form of ribonuclease L (RNASEL) leading to its dimerization and subsequent activation. Activation of RNASEL leads to degradation of cellular as well as viral RNA, resulting in the inhibition of protein synthesis, thus terminating viral replication. Can mediate the antiviral effect via the classical RNASEL-dependent pathway or an alternative antiviral pathway independent of RNASEL. In addition, it may also play a role in other cellular processes such as apoptosis, cell growth, differentiation and gene regulation. May act as a negative regulator of lactation, stopping lactation in virally infected mammary gland lobules, thereby preventing transmission of viruses to neonates. Non-infected lobules would not be affected, allowing efficient pup feeding during infection. In Rattus norvegicus (Rat), this protein is 2'-5'-oligoadenylate synthase 2 (Oas2).